Here is a 418-residue protein sequence, read N- to C-terminus: 3-isopropylmalate dehydratase large subunit 1 (418 aa).

[4Fe-4S] cluster-binding residues include Cys298, Cys358, and Cys361.

The protein belongs to the aconitase/IPM isomerase family. LeuC type 2 subfamily. As to quaternary structure, heterodimer of LeuC and LeuD. [4Fe-4S] cluster serves as cofactor.

It catalyses the reaction (2R,3S)-3-isopropylmalate = (2S)-2-isopropylmalate. Its pathway is amino-acid biosynthesis; L-leucine biosynthesis; L-leucine from 3-methyl-2-oxobutanoate: step 2/4. Catalyzes the isomerization between 2-isopropylmalate and 3-isopropylmalate, via the formation of 2-isopropylmaleate. The chain is 3-isopropylmalate dehydratase large subunit 1 from Thermotoga maritima (strain ATCC 43589 / DSM 3109 / JCM 10099 / NBRC 100826 / MSB8).